The following is a 219-amino-acid chain: MEKAEAAAVVIPLSVSNPSYRGSGMSDQEVSEEQSAGDAWVSAAMAAAEAVAAAATSTGIDNTNDYTYTAASENGDPGFTLGDNTYGPNGAASGCPSPPSPEVVGLEMVVVSSLAPEIAAAVPADTIFASAAAPATRVDDGNAPLLGPGQAQDYDSESGCYYSESDNETASMFIRRVGRRQARRHRRRRVALTVAGVILVVVLCAISGIVGAFLARVFP.

The Intravirion segment spans residues 1-193 (MEKAEAAAVV…RHRRRRVALT (193 aa)). Positions 145 to 146 (LL) match the Di-leucine internalization motif motif. The interval 153-168 (DYDSESGCYYSESDNE) is acidic. A phosphoserine; by host CK2 mark is found at S163 and S165. A helical; Signal-anchor for type II membrane protein membrane pass occupies residues 194–214 (VAGVILVVVLCAISGIVGAFL). The Virion surface portion of the chain corresponds to 215-219 (ARVFP).

The protein belongs to the alphaherpesvirinae envelope protein US9 family. In terms of processing, phosphorylated on serines within the acidic cluster. Phosphorylation determines whether endocytosed viral US9 traffics to the trans-Golgi network or recycles to the cell membrane.

It is found in the virion membrane. Its subcellular location is the host Golgi apparatus membrane. The protein resides in the host smooth endoplasmic reticulum membrane. The protein localises to the host cell membrane. Its function is as follows. Essential for the anterograde spread of the infection throughout the host nervous system. Together with the gE/gI heterodimer, US9 is involved in the sorting and transport of viral structural components toward axon tips. This is Envelope protein US9 homolog from Equine herpesvirus 1 (strain Ab4p) (EHV-1).